A 256-amino-acid chain; its full sequence is 5-oxoprolinase subunit A (256 aa).

It belongs to the LamB/PxpA family. Forms a complex composed of PxpA, PxpB and PxpC.

It carries out the reaction 5-oxo-L-proline + ATP + 2 H2O = L-glutamate + ADP + phosphate + H(+). Functionally, catalyzes the cleavage of 5-oxoproline to form L-glutamate coupled to the hydrolysis of ATP to ADP and inorganic phosphate. The sequence is that of 5-oxoprolinase subunit A from Azoarcus sp. (strain BH72).